Here is a 594-residue protein sequence, read N- to C-terminus: Aspartate--tRNA(Asp/Asn) ligase (594 aa).

Glu-175 provides a ligand contact to L-aspartate. The tract at residues Gln-199–Lys-202 is aspartate. L-aspartate contacts are provided by Arg-221 and His-455. Arg-221 to Glu-223 is an ATP binding site. Glu-488 serves as a coordination point for ATP. Arg-495 serves as a coordination point for L-aspartate. Gly-540–Arg-543 lines the ATP pocket.

This sequence belongs to the class-II aminoacyl-tRNA synthetase family. Type 1 subfamily. As to quaternary structure, homodimer.

The protein localises to the cytoplasm. The enzyme catalyses tRNA(Asx) + L-aspartate + ATP = L-aspartyl-tRNA(Asx) + AMP + diphosphate. Functionally, aspartyl-tRNA synthetase with relaxed tRNA specificity since it is able to aspartylate not only its cognate tRNA(Asp) but also tRNA(Asn). Reaction proceeds in two steps: L-aspartate is first activated by ATP to form Asp-AMP and then transferred to the acceptor end of tRNA(Asp/Asn). This chain is Aspartate--tRNA(Asp/Asn) ligase, found in Ruegeria sp. (strain TM1040) (Silicibacter sp.).